Reading from the N-terminus, the 119-residue chain is NADH-quinone oxidoreductase subunit A (119 aa).

Transmembrane regions (helical) follow at residues 7–27, 63–83, and 88–108; these read FPVL…MTIG, LIAI…PWGV, and IGWP…VGFV.

It belongs to the complex I subunit 3 family. NDH-1 is composed of 14 different subunits. Subunits NuoA, H, J, K, L, M, N constitute the membrane sector of the complex.

The protein resides in the cell inner membrane. It carries out the reaction a quinone + NADH + 5 H(+)(in) = a quinol + NAD(+) + 4 H(+)(out). NDH-1 shuttles electrons from NADH, via FMN and iron-sulfur (Fe-S) centers, to quinones in the respiratory chain. The immediate electron acceptor for the enzyme in this species is believed to be ubiquinone. Couples the redox reaction to proton translocation (for every two electrons transferred, four hydrogen ions are translocated across the cytoplasmic membrane), and thus conserves the redox energy in a proton gradient. The chain is NADH-quinone oxidoreductase subunit A from Ralstonia pickettii (strain 12J).